An 89-amino-acid polypeptide reads, in one-letter code: Large ribosomal subunit protein bL27 (89 aa).

The tract at residues 1–21 (MAHKKAGGSSRNGRDSKGKRL) is disordered.

The protein belongs to the bacterial ribosomal protein bL27 family.

The polypeptide is Large ribosomal subunit protein bL27 (Bradyrhizobium sp. (strain BTAi1 / ATCC BAA-1182)).